Reading from the N-terminus, the 317-residue chain is Probable cell division protein WhiA (317 aa).

Positions 276–310 form a DNA-binding region, H-T-H motif; that stretch reads TLKELGEMVSGGKISKSGINHRLRKIDDIAEKLRA.

It belongs to the WhiA family.

Functionally, involved in cell division and chromosome segregation. This is Probable cell division protein WhiA from Bacillus thuringiensis (strain Al Hakam).